A 208-amino-acid chain; its full sequence is Outer-membrane lipoprotein carrier protein (208 aa).

A signal peptide spans 1 to 21 (MKKLNTLLLVLGSLVATPSFA). The segment at 188-208 (KSTFEFTPPEGVEIDDQSNGE) is disordered. Over residues 199–208 (VEIDDQSNGE) the composition is skewed to acidic residues.

It belongs to the LolA family. As to quaternary structure, monomer.

Its subcellular location is the periplasm. In terms of biological role, participates in the translocation of lipoproteins from the inner membrane to the outer membrane. Only forms a complex with a lipoprotein if the residue after the N-terminal Cys is not an aspartate (The Asp acts as a targeting signal to indicate that the lipoprotein should stay in the inner membrane). This Pseudoalteromonas translucida (strain TAC 125) protein is Outer-membrane lipoprotein carrier protein.